A 490-amino-acid polypeptide reads, in one-letter code: Bifunctional protein GlmU (490 aa).

Residues 1 to 241 (MSSPGDTAVL…SALVAGVNNR (241 aa)) are pyrophosphorylase. Residues 12–15 (LAAG), K26, Q83, 88–89 (GT), 112–114 (SGD), G151, E166, N181, and N239 contribute to the UDP-N-acetyl-alpha-D-glucosamine site. Residue D114 coordinates Mg(2+). Mg(2+) is bound at residue N239. A linker region spans residues 242 to 262 (VQLAQLGAELNRRIVAAHQLA). The segment at 263-490 (GVTVVDPATT…AGGRPAGEAE (228 aa)) is N-acetyltransferase. UDP-N-acetyl-alpha-D-glucosamine contacts are provided by R344 and K362. H374 serves as the catalytic Proton acceptor. The UDP-N-acetyl-alpha-D-glucosamine site is built by Y377 and N388. Residues A391, 397-398 (NY), S416, and A434 each bind acetyl-CoA. A disordered region spans residues 462 to 490 (RRKRPGSAAARAAEAAEKAAGGRPAGEAE). Residues 467–490 (GSAAARAAEAAEKAAGGRPAGEAE) are compositionally biased toward low complexity.

It in the N-terminal section; belongs to the N-acetylglucosamine-1-phosphate uridyltransferase family. In the C-terminal section; belongs to the transferase hexapeptide repeat family. In terms of assembly, homotrimer. The cofactor is Mg(2+).

Its subcellular location is the cytoplasm. The catalysed reaction is alpha-D-glucosamine 1-phosphate + acetyl-CoA = N-acetyl-alpha-D-glucosamine 1-phosphate + CoA + H(+). It carries out the reaction N-acetyl-alpha-D-glucosamine 1-phosphate + UTP + H(+) = UDP-N-acetyl-alpha-D-glucosamine + diphosphate. It functions in the pathway nucleotide-sugar biosynthesis; UDP-N-acetyl-alpha-D-glucosamine biosynthesis; N-acetyl-alpha-D-glucosamine 1-phosphate from alpha-D-glucosamine 6-phosphate (route II): step 2/2. The protein operates within nucleotide-sugar biosynthesis; UDP-N-acetyl-alpha-D-glucosamine biosynthesis; UDP-N-acetyl-alpha-D-glucosamine from N-acetyl-alpha-D-glucosamine 1-phosphate: step 1/1. Its pathway is bacterial outer membrane biogenesis; LPS lipid A biosynthesis. Catalyzes the last two sequential reactions in the de novo biosynthetic pathway for UDP-N-acetylglucosamine (UDP-GlcNAc). The C-terminal domain catalyzes the transfer of acetyl group from acetyl coenzyme A to glucosamine-1-phosphate (GlcN-1-P) to produce N-acetylglucosamine-1-phosphate (GlcNAc-1-P), which is converted into UDP-GlcNAc by the transfer of uridine 5-monophosphate (from uridine 5-triphosphate), a reaction catalyzed by the N-terminal domain. In Mycolicibacterium paratuberculosis (strain ATCC BAA-968 / K-10) (Mycobacterium paratuberculosis), this protein is Bifunctional protein GlmU.